The sequence spans 615 residues: Zinc metalloproteinase R519 (615 aa).

The Peptidase M13 domain occupies 1–611 (MTYRSCIPQN…LDPQLRSRIL (611 aa)). His454 lines the Zn(2+) pocket. Glu455 is a catalytic residue. Zn(2+) is bound by residues His458 and Glu513. Asp517 acts as the Proton donor in catalysis.

It belongs to the peptidase M13 family. Zn(2+) serves as cofactor.

Its function is as follows. Zinc metalloprotease. In Acanthamoeba polyphaga (Amoeba), this protein is Zinc metalloproteinase R519.